The chain runs to 526 residues: Outer capsid protein VP5 (526 aa).

Residues M1–E42 are involved in membrane permeabilization.

The protein belongs to the orbivirus VP5 family.

It is found in the virion. In terms of biological role, VP5 protein is one of the two proteins (with VP2) which constitute the virus particle outer capsid. Acts as a membrane permeabilization protein that mediates release of viral particles from endosomal compartments into the cytoplasm. Permeabilization activity is probably negatively regulated by VP2 and is triggered by endosomal degradation of VP2 and exposure to low pH. The sequence is that of Outer capsid protein VP5 (Segment-6) from Bluetongue virus 11 (isolate USA) (BTV 11).